Here is a 152-residue protein sequence, read N- to C-terminus: Aspartate-rich protein (152 aa).

The signal sequence occupies residues 1-19; sequence MQKLLLAVLFFSLLAVATA. Over residues 82–113 the composition is skewed to basic and acidic residues; the sequence is ATPKTEAEPGSLDKGEGTKGEKGKEGKKEKGE. Positions 82-152 are disordered; it reads ATPKTEAEPG…VHENDDENED (71 aa). The span at 135 to 152 shows a compositional bias: acidic residues; sequence DDDDDRDDVHENDDENED.

As to expression, prismatic layer of shell (at protein level). Expressed primarily in the mantle with highest level in the mantle edge and lower level in the mantle pallium.

It is found in the secreted. This is Aspartate-rich protein from Margaritifera margaritifera (Freshwater pearl mussel).